Reading from the N-terminus, the 140-residue chain is Nucleoside diphosphate kinase (140 aa).

Lys-11, Phe-59, Arg-87, Thr-93, Arg-104, and Asn-114 together coordinate ATP. Residue His-117 is the Pros-phosphohistidine intermediate of the active site.

Belongs to the NDK family. In terms of assembly, homotetramer. Mg(2+) serves as cofactor.

Its subcellular location is the cytoplasm. The catalysed reaction is a 2'-deoxyribonucleoside 5'-diphosphate + ATP = a 2'-deoxyribonucleoside 5'-triphosphate + ADP. It catalyses the reaction a ribonucleoside 5'-diphosphate + ATP = a ribonucleoside 5'-triphosphate + ADP. In terms of biological role, major role in the synthesis of nucleoside triphosphates other than ATP. The ATP gamma phosphate is transferred to the NDP beta phosphate via a ping-pong mechanism, using a phosphorylated active-site intermediate. The chain is Nucleoside diphosphate kinase from Rickettsia felis (strain ATCC VR-1525 / URRWXCal2) (Rickettsia azadi).